Reading from the N-terminus, the 421-residue chain is ATP-dependent RNA helicase RhlB (421 aa).

Positions 9–37 (QKFSDFALHPKVVEALEKKGFHNCTPIQA) match the Q motif motif. One can recognise a Helicase ATP-binding domain in the interval 40 to 219 (LPLTLAGRDV…FEQMNNAEYI (180 aa)). 53–60 (AQTGTGKT) contributes to the ATP binding site. Positions 165-168 (DEAD) match the DEAD box motif. Positions 245–390 (RLLQTLIEEE…VSKYNPDALM (146 aa)) constitute a Helicase C-terminal domain. The segment at 392 to 421 (DLPKPLRLTRPRTGNGPRRTGAPRNRRRSG) is disordered. The segment covering 402–414 (PRTGNGPRRTGAP) has biased composition (low complexity).

It belongs to the DEAD box helicase family. RhlB subfamily. As to quaternary structure, component of the RNA degradosome, which is a multiprotein complex involved in RNA processing and mRNA degradation.

The protein localises to the cytoplasm. It carries out the reaction ATP + H2O = ADP + phosphate + H(+). In terms of biological role, DEAD-box RNA helicase involved in RNA degradation. Has RNA-dependent ATPase activity and unwinds double-stranded RNA. The chain is ATP-dependent RNA helicase RhlB from Escherichia coli O157:H7.